A 229-amino-acid chain; its full sequence is PKHD-type hydroxylase Nham_1514 (229 aa).

One can recognise a Fe2OG dioxygenase domain in the interval 78–180; sequence QIFPPLFNRY…RVASFFWLQS (103 aa). Fe cation is bound by residues His-98, Asp-100, and His-161. Residue Arg-171 coordinates 2-oxoglutarate.

Fe(2+) is required as a cofactor. It depends on L-ascorbate as a cofactor.

In Nitrobacter hamburgensis (strain DSM 10229 / NCIMB 13809 / X14), this protein is PKHD-type hydroxylase Nham_1514.